Consider the following 421-residue polypeptide: Serine--tRNA ligase (421 aa).

229 to 231 (TAE) provides a ligand contact to L-serine. 260–262 (RAE) serves as a coordination point for ATP. Glu283 serves as a coordination point for L-serine. 347-350 (EISS) provides a ligand contact to ATP. L-serine is bound at residue Ser383.

This sequence belongs to the class-II aminoacyl-tRNA synthetase family. Type-1 seryl-tRNA synthetase subfamily. Homodimer. The tRNA molecule binds across the dimer.

The protein localises to the cytoplasm. It carries out the reaction tRNA(Ser) + L-serine + ATP = L-seryl-tRNA(Ser) + AMP + diphosphate + H(+). It catalyses the reaction tRNA(Sec) + L-serine + ATP = L-seryl-tRNA(Sec) + AMP + diphosphate + H(+). The protein operates within aminoacyl-tRNA biosynthesis; selenocysteinyl-tRNA(Sec) biosynthesis; L-seryl-tRNA(Sec) from L-serine and tRNA(Sec): step 1/1. Functionally, catalyzes the attachment of serine to tRNA(Ser). Is also able to aminoacylate tRNA(Sec) with serine, to form the misacylated tRNA L-seryl-tRNA(Sec), which will be further converted into selenocysteinyl-tRNA(Sec). The protein is Serine--tRNA ligase of Desulfitobacterium hafniense (strain DSM 10664 / DCB-2).